The following is a 2278-amino-acid chain: Protein Ycf2 (2278 aa).

1632–1639 is an ATP binding site; it reads GSIGTGRS.

The protein belongs to the Ycf2 family.

It localises to the plastid. Its subcellular location is the chloroplast stroma. Its function is as follows. Probable ATPase of unknown function. Its presence in a non-photosynthetic plant (Epifagus virginiana) and experiments in tobacco indicate that it has an essential function which is probably not related to photosynthesis. This is Protein Ycf2 from Solanum tuberosum (Potato).